Reading from the N-terminus, the 198-residue chain is Pyridoxal 5'-phosphate synthase subunit PdxT (198 aa).

L-glutamine is bound at residue 52-54; the sequence is GES. The active-site Nucleophile is the cysteine 84. Residues arginine 116 and 143-144 contribute to the L-glutamine site; that span reads IR. Active-site charge relay system residues include histidine 179 and glutamate 181.

Belongs to the glutaminase PdxT/SNO family. As to quaternary structure, in the presence of PdxS, forms a dodecamer of heterodimers. Only shows activity in the heterodimer.

The catalysed reaction is aldehydo-D-ribose 5-phosphate + D-glyceraldehyde 3-phosphate + L-glutamine = pyridoxal 5'-phosphate + L-glutamate + phosphate + 3 H2O + H(+). It catalyses the reaction L-glutamine + H2O = L-glutamate + NH4(+). Its pathway is cofactor biosynthesis; pyridoxal 5'-phosphate biosynthesis. In terms of biological role, catalyzes the hydrolysis of glutamine to glutamate and ammonia as part of the biosynthesis of pyridoxal 5'-phosphate. The resulting ammonia molecule is channeled to the active site of PdxS. The protein is Pyridoxal 5'-phosphate synthase subunit PdxT of Caldivirga maquilingensis (strain ATCC 700844 / DSM 13496 / JCM 10307 / IC-167).